We begin with the raw amino-acid sequence, 541 residues long: Membrane protein insertase YidC (541 aa).

Residues 6–26 (SLLVLALIFISFLVYQQWQLD) traverse the membrane as a helical segment. The segment at 34 to 56 (EQTTSITATSDVPASSPSNSQAI) is disordered. A run of 4 helical transmembrane segments spans residues 337–357 (FWLL…IICV), 416–436 (LGGC…YWTF), 454–474 (LSAQ…MFLL), and 495–515 (PLIF…YWLV).

This sequence belongs to the OXA1/ALB3/YidC family. Type 1 subfamily. As to quaternary structure, interacts with the Sec translocase complex via SecD. Specifically interacts with transmembrane segments of nascent integral membrane proteins during membrane integration.

It localises to the cell inner membrane. Functionally, required for the insertion and/or proper folding and/or complex formation of integral membrane proteins into the membrane. Involved in integration of membrane proteins that insert both dependently and independently of the Sec translocase complex, as well as at least some lipoproteins. Aids folding of multispanning membrane proteins. The chain is Membrane protein insertase YidC from Haemophilus influenzae (strain PittEE).